The chain runs to 469 residues: Regulator of G-protein signaling 7 (469 aa).

A DEP domain is found at Glu-37–Thr-112. A phosphoserine mark is found at Ser-229 and Ser-241. The disordered stretch occupies residues Asn-235–Asp-256. Thr-243 carries the phosphothreonine modification. The region spanning Glu-255–Leu-316 is the G protein gamma domain. An RGS domain is found at Gly-333–Leu-448. Ser-434 carries the phosphoserine modification.

In terms of assembly, interacts with GNB5, forming the RGS7-GNB5 complex. Interacts with GPR158; promotes the GTPase activator activity of the RGS7-GNB5 complex in absence of glycine, in contrast GTPase activator activity of the RGS7-GNB5 complex is inhibited in presence of glycine. Interacts with GPR179. Interacts with PKD1; this prevents rapid proteasomal degradation. Interacts with RGS7BP, leading to regulate the subcellular location of the heterodimer formed with GNB5. Interacts (phosphorylated form) with 14-3-3 protein YWHAQ. Interacts with SNAPIN. Interacts with GNAI1. Interacts with GNAO1, GNAI3 and GNAZ. Palmitoylated. In terms of processing, ubiquitinated, leading to rapid proteasomal degradation. Post-translationally, phosphorylation and subsequent interaction with 14-3-3 proteins inhibits GAP activity. In terms of tissue distribution, detected in retina (at protein level).

The protein resides in the cytoplasm. Its subcellular location is the cytosol. It is found in the cell membrane. The protein localises to the membrane. Its function is as follows. GTPase activator component of the RGS7-GNB5 complex that regulates G protein-coupled receptor signaling cascades. The RGS7-GNB5 complex acts as an inhibitor signal transduction by promoting the GTPase activity of G protein alpha subunits, such as GNAO1, thereby driving them into their inactive GDP-bound form. May play a role in synaptic vesicle exocytosis. Glycine-dependent regulation of the RGS7-GNB5 complex by GPR158 affects mood and cognition via its ability to regulate neuronal excitability in L2/L3 pyramidal neurons of the prefrontal cortex. Modulates the activity of potassium channels that are activated by GNAO1 in response to muscarinic acetylcholine receptor M2/CHRM2 signaling. The sequence is that of Regulator of G-protein signaling 7 (RGS7) from Bos taurus (Bovine).